Consider the following 430-residue polypeptide: Dihydroorotase (430 aa).

Zn(2+)-binding residues include histidine 60 and histidine 62. Residues 62 to 64 and asparagine 94 contribute to the substrate site; that span reads HLR. Zn(2+) contacts are provided by aspartate 152, histidine 179, histidine 232, and aspartate 305. Aspartate 305 is an active-site residue. Substrate is bound by residues histidine 309 and 323-324; that span reads FG.

It belongs to the metallo-dependent hydrolases superfamily. DHOase family. Class I DHOase subfamily. Zn(2+) serves as cofactor.

It catalyses the reaction (S)-dihydroorotate + H2O = N-carbamoyl-L-aspartate + H(+). It functions in the pathway pyrimidine metabolism; UMP biosynthesis via de novo pathway; (S)-dihydroorotate from bicarbonate: step 3/3. Functionally, catalyzes the reversible cyclization of carbamoyl aspartate to dihydroorotate. The protein is Dihydroorotase of Solibacter usitatus (strain Ellin6076).